The sequence spans 317 residues: 3-oxoacyl-[acyl-carrier-protein] reductase 5, chloroplastic (317 aa).

Residues 1–57 constitute a chloroplast transit peptide; it reads TTVAATKLTSLKATAGKLGYREICQVRQWAPLKSAMPHFGMLRCATSTVVKAQAQAQ. 79–103 serves as a coordination point for NADP(+); it reads VTGASRGIGKAIALSLGKAGCKVLV. S211 contacts substrate. Y224 (proton acceptor) is an active-site residue.

Belongs to the short-chain dehydrogenases/reductases (SDR) family. As to quaternary structure, homotetramer.

Its subcellular location is the plastid. It is found in the chloroplast. The enzyme catalyses a (3R)-hydroxyacyl-[ACP] + NADP(+) = a 3-oxoacyl-[ACP] + NADPH + H(+). The protein operates within lipid metabolism; fatty acid biosynthesis. The chain is 3-oxoacyl-[acyl-carrier-protein] reductase 5, chloroplastic (bkr1) from Brassica napus (Rape).